Here is a 611-residue protein sequence, read N- to C-terminus: Dihydroxy-acid dehydratase (611 aa).

D81 is a binding site for Mg(2+). Position 122 (C122) interacts with [2Fe-2S] cluster. Positions 123 and 124 each coordinate Mg(2+). K124 is subject to N6-carboxylysine. C195 is a binding site for [2Fe-2S] cluster. Residue E491 coordinates Mg(2+). S517 serves as the catalytic Proton acceptor.

This sequence belongs to the IlvD/Edd family. As to quaternary structure, homodimer. It depends on [2Fe-2S] cluster as a cofactor. Mg(2+) is required as a cofactor.

It catalyses the reaction (2R)-2,3-dihydroxy-3-methylbutanoate = 3-methyl-2-oxobutanoate + H2O. The catalysed reaction is (2R,3R)-2,3-dihydroxy-3-methylpentanoate = (S)-3-methyl-2-oxopentanoate + H2O. It functions in the pathway amino-acid biosynthesis; L-isoleucine biosynthesis; L-isoleucine from 2-oxobutanoate: step 3/4. It participates in amino-acid biosynthesis; L-valine biosynthesis; L-valine from pyruvate: step 3/4. Functionally, functions in the biosynthesis of branched-chain amino acids. Catalyzes the dehydration of (2R,3R)-2,3-dihydroxy-3-methylpentanoate (2,3-dihydroxy-3-methylvalerate) into 2-oxo-3-methylpentanoate (2-oxo-3-methylvalerate) and of (2R)-2,3-dihydroxy-3-methylbutanoate (2,3-dihydroxyisovalerate) into 2-oxo-3-methylbutanoate (2-oxoisovalerate), the penultimate precursor to L-isoleucine and L-valine, respectively. This is Dihydroxy-acid dehydratase from Histophilus somni (strain 2336) (Haemophilus somnus).